We begin with the raw amino-acid sequence, 309 residues long: Mitochondrial succinate-fumarate transporter 1 (309 aa).

Solcar repeat units follow at residues 11–96 (IPPY…FQTA), 108–196 (RGRF…FDIL), and 208–298 (LQPW…VTGL). Helical transmembrane passes span 17-37 (AVSGSLGGVVEACCLQPIDVI), 65-85 (VRALWKGLTPFATHLTLKYTL), 111-131 (FLSGFGAGVLEALAIVTPFEV), 171-191 (GAAPTVMRNGTNQAVMFTAKN), 214-234 (MISGFLAGTAGPFCTGPFDVV), and 273-293 (GLLPRLMRIPPGQAIMWAVAD).

It belongs to the mitochondrial carrier (TC 2.A.29) family. In terms of tissue distribution, expressed in root tips, cotyledons, hypocotyls, leaves, trichomes, stems, flowers, carpels, anthers, pollen and abscission zone of siliques.

It localises to the mitochondrion inner membrane. May transport cytoplasmic succinate, derived from fatty acid oxidation, into the mitochondrial matrix in exchange of fumarate during lipid mobilization in seed germination. Conversion of seed-reserved triacylglycerols into sucrose is necessary for growth before the onset of photosynthesis and involves fatty acid beta-oxidation, the glyoxylate cycle and gluconeogenesis. This is Mitochondrial succinate-fumarate transporter 1 (SFC1) from Arabidopsis thaliana (Mouse-ear cress).